A 339-amino-acid polypeptide reads, in one-letter code: Retroviral-like aspartic protease 1 (339 aa).

The propeptide occupies methionine 1 to asparagine 188. Residues valine 34 to proline 53 are disordered. The segment covering phenylalanine 38 to proline 53 has biased composition (polar residues). An N-linked (GlcNAc...) asparagine glycan is attached at asparagine 39. Residues leucine 55–alanine 75 form a helical membrane-spanning segment. In terms of domain architecture, Peptidase A2 spans valine 205–valine 286. Aspartate 210 is an active-site residue. An N-linked (GlcNAc...) asparagine glycan is attached at asparagine 274. Residues leucine 325–histidine 339 constitute a propeptide that is removed on maturation.

Homodimer. Undergoes autocleavage which is necessary for activation of the protein. Highly expressed in stratified epithelia in skin, tongue, esophagus, forestomach and vagina. Also expressed in trachea, urinary bladder and thymus. Undetectable in simple epithelia. Within the epidermis, expressed exclusively in the granular layer (at protein level). Levels are elevated in benign skin tumors but are down-regulated in squamous cell carcinomas.

It is found in the membrane. Functionally, protease responsible for filaggrin processing, essential for the maintenance of a proper epidermis organization. This Mus musculus (Mouse) protein is Retroviral-like aspartic protease 1.